The sequence spans 387 residues: Chorismate synthase (387 aa).

Arginine 42 and arginine 48 together coordinate NADP(+). Residues 131–133 (RSS), 251–252 (QA), glycine 295, 310–314 (KPIPT), and arginine 336 contribute to the FMN site.

It belongs to the chorismate synthase family. In terms of assembly, homotetramer. It depends on FMNH2 as a cofactor.

The enzyme catalyses 5-O-(1-carboxyvinyl)-3-phosphoshikimate = chorismate + phosphate. Its pathway is metabolic intermediate biosynthesis; chorismate biosynthesis; chorismate from D-erythrose 4-phosphate and phosphoenolpyruvate: step 7/7. Catalyzes the anti-1,4-elimination of the C-3 phosphate and the C-6 proR hydrogen from 5-enolpyruvylshikimate-3-phosphate (EPSP) to yield chorismate, which is the branch point compound that serves as the starting substrate for the three terminal pathways of aromatic amino acid biosynthesis. This reaction introduces a second double bond into the aromatic ring system. The chain is Chorismate synthase from Syntrophotalea carbinolica (strain DSM 2380 / NBRC 103641 / GraBd1) (Pelobacter carbinolicus).